The chain runs to 166 residues: Lipoprotein signal peptidase (166 aa).

4 helical membrane passes run 9–29, 45–65, 71–91, and 99–119; these read ASGA…FDQL, ALTS…FGFL, WQRW…CYLL, and LFSL…IDRL. Catalysis depends on residues D126 and D144. A helical membrane pass occupies residues 135–155; sequence WHFPAFNLADSAITVGAVLLI.

Belongs to the peptidase A8 family.

It localises to the cell inner membrane. The enzyme catalyses Release of signal peptides from bacterial membrane prolipoproteins. Hydrolyzes -Xaa-Yaa-Zaa-|-(S,diacylglyceryl)Cys-, in which Xaa is hydrophobic (preferably Leu), and Yaa (Ala or Ser) and Zaa (Gly or Ala) have small, neutral side chains.. It participates in protein modification; lipoprotein biosynthesis (signal peptide cleavage). In terms of biological role, this protein specifically catalyzes the removal of signal peptides from prolipoproteins. The sequence is that of Lipoprotein signal peptidase from Burkholderia vietnamiensis (strain G4 / LMG 22486) (Burkholderia cepacia (strain R1808)).